The following is a 358-amino-acid chain: Phospho-N-acetylmuramoyl-pentapeptide-transferase (358 aa).

The next 10 helical transmembrane spans lie at 3–23 (QILFAAAIALTVSILLTPALI), 54–74 (GVAILIGMWAGYLGSHLIGIA), 84–104 (ALLVLGLATALGAVGFIDDFI), 114–134 (LTAAGKYLGQLTAAIVFGVLA), 156–176 (ITTVSMGVIVFLAFVSLVVVA), 187–207 (LDGLAAGSMSLVLGGYVIITF), 231–251 (LALVCAAGTAACIGFLWWNAA), 255–275 (IFMGDTGSLALGGLLAGLSIT), 283–303 (VVIGALFVAEAASVVLQVAVF), and 330–350 (VIIRFWLLAAMASAFGLGLFY).

Belongs to the glycosyltransferase 4 family. MraY subfamily. Mg(2+) serves as cofactor.

Its subcellular location is the cell membrane. The enzyme catalyses UDP-N-acetyl-alpha-D-muramoyl-L-alanyl-gamma-D-glutamyl-meso-2,6-diaminopimeloyl-D-alanyl-D-alanine + di-trans,octa-cis-undecaprenyl phosphate = di-trans,octa-cis-undecaprenyl diphospho-N-acetyl-alpha-D-muramoyl-L-alanyl-D-glutamyl-meso-2,6-diaminopimeloyl-D-alanyl-D-alanine + UMP. The protein operates within cell wall biogenesis; peptidoglycan biosynthesis. Functionally, catalyzes the initial step of the lipid cycle reactions in the biosynthesis of the cell wall peptidoglycan: transfers peptidoglycan precursor phospho-MurNAc-pentapeptide from UDP-MurNAc-pentapeptide onto the lipid carrier undecaprenyl phosphate, yielding undecaprenyl-pyrophosphoryl-MurNAc-pentapeptide, known as lipid I. In Nocardia farcinica (strain IFM 10152), this protein is Phospho-N-acetylmuramoyl-pentapeptide-transferase.